A 423-amino-acid chain; its full sequence is MMSSVKKTICVLLVCFTMMSVMLLGPGVTEVSAASDAKVNISADRQVIRGFGGMNHPAWIGDLTAAQRETAFGNGQNQLGFSVLRIHVDENRNNWYKEVETAKSAIKHGAIVFASPWNPPNDMVETFNHNGDTSAKRLRYDKYAAYAQHLNDFVNFMKSNGVNLYAISMQNEPDYAHEWTWWTPQEILRFMRENAGSINARVIAPESFQYLKNISDPILNDPQALRNMDILGTHLYGTQVSQFPYPLFKQKGGGKELWMTEVYYPNSDNNSADRWPEALGVSEHIHHSMVEGDFQAYVWWYIRRSYGPMKEDGMISKRGYNMAHFSKFVRPGYVRIDATKNPEPNVYVSAYKGDNKVVIVAINKNNTGVNQNFVLQNGTASQVSRWITSSSSNLQPGTDLKVTDNHFWAHLPAQSVTTFVVKR.

Residues 1–33 (MMSSVKKTICVLLVCFTMMSVMLLGPGVTEVSA) form the signal peptide. E172 (proton donor) is an active-site residue. The Nucleophile role is filled by E261.

This sequence belongs to the glycosyl hydrolase 30 family.

It is found in the secreted. It catalyses the reaction Endohydrolysis of (1-&gt;4)-beta-D-xylosyl links in some glucuronoarabinoxylans.. Its pathway is glycan degradation; xylan degradation. In terms of biological role, catalyzes the depolymerization of methylglucuronoxylan (MeGAXn). It cleaves the beta-1,4-xylosidic bond penultimate to that linking carbon one of the xylose residue substituted with alpha-1,2-linked 4-O-methyl-D-glucuronate (MeGA). The polypeptide is Glucuronoxylanase XynC (xynC) (Bacillus subtilis).